Here is a 668-residue protein sequence, read N- to C-terminus: Fructose-1,6-bisphosphatase class 3 (668 aa).

This sequence belongs to the FBPase class 3 family. Mn(2+) is required as a cofactor.

The catalysed reaction is beta-D-fructose 1,6-bisphosphate + H2O = beta-D-fructose 6-phosphate + phosphate. Its pathway is carbohydrate biosynthesis; gluconeogenesis. The chain is Fructose-1,6-bisphosphatase class 3 from Clostridium botulinum (strain Kyoto / Type A2).